We begin with the raw amino-acid sequence, 441 residues long: UDP-N-acetylmuramoylalanine--D-glutamate ligase (441 aa).

Glycine 112 to threonine 118 contributes to the ATP binding site.

This sequence belongs to the MurCDEF family.

Its subcellular location is the cytoplasm. It catalyses the reaction UDP-N-acetyl-alpha-D-muramoyl-L-alanine + D-glutamate + ATP = UDP-N-acetyl-alpha-D-muramoyl-L-alanyl-D-glutamate + ADP + phosphate + H(+). The protein operates within cell wall biogenesis; peptidoglycan biosynthesis. In terms of biological role, cell wall formation. Catalyzes the addition of glutamate to the nucleotide precursor UDP-N-acetylmuramoyl-L-alanine (UMA). The polypeptide is UDP-N-acetylmuramoylalanine--D-glutamate ligase (Gloeobacter violaceus (strain ATCC 29082 / PCC 7421)).